The sequence spans 243 residues: Ion-translocating oxidoreductase complex subunit E (243 aa).

A run of 6 helical transmembrane segments spans residues 40-60 (LGMG…ISAL), 72-92 (AFIL…NAWL), 94-114 (DLHK…AILG), 129-149 (ALDG…VGAI), 152-172 (ILGS…HFAF), and 183-203 (GFLI…LFAL).

Belongs to the NqrDE/RnfAE family. As to quaternary structure, the complex is composed of six subunits: RnfA, RnfB, RnfC, RnfD, RnfE and RnfG.

It localises to the cellular chromatophore membrane. In terms of biological role, part of a membrane-bound complex that couples electron transfer with translocation of ions across the membrane. Required for nitrogen fixation. Involved in electron transfer to nitrogenase. This is Ion-translocating oxidoreductase complex subunit E from Rhodobacter capsulatus (Rhodopseudomonas capsulata).